Reading from the N-terminus, the 126-residue chain is MHLSQLLACALLLTLLSLRPSEAKPGAPPKVPRTPPAEELAEPQAAGGGQKKGDKAPGGGGANLKGDRSRLLRDLRVDTKSRAAWARLLQEHPNARKYKGANKKGLSKGCFGLKLDRIGSMSGLGC.

The signal sequence occupies residues 1–23 (MHLSQLLACALLLTLLSLRPSEA). Residues 20–71 (PSEAKPGAPPKVPRTPPAEELAEPQAAGGGQKKGDKAPGGGGANLKGDRSRL) form a disordered region. The propeptide occupies 24-73 (KPGAPPKVPRTPPAEELAEPQAAGGGQKKGDKAPGGGGANLKGDRSRLLR). Residues 26 to 35 (GAPPKVPRTP) show a composition bias toward pro residues. Gly residues predominate over residues 46–63 (AGGGQKKGDKAPGGGGAN). Residues Cys110 and Cys126 are joined by a disulfide bond.

Belongs to the natriuretic peptide family. Degraded by IDE (in vitro). As to expression, in the kidney, predominantly expressed in the distal tubular cells (at protein level).

Its subcellular location is the secreted. Its function is as follows. Hormone which plays a role in endochondral ossification through regulation of cartilaginous growth plate chondrocytes proliferation and differentiation. May also be vasoactive and natriuretic. Acts by specifically binding and stimulating NPR2 to produce cGMP. Binds the clearance receptor NPR3. This chain is C-type natriuretic peptide (NPPC), found in Homo sapiens (Human).